The primary structure comprises 511 residues: Probable cytochrome P450 4d21 (511 aa).

Residue Cys-456 participates in heme binding.

This sequence belongs to the cytochrome P450 family. Heme is required as a cofactor.

Its subcellular location is the endoplasmic reticulum membrane. It is found in the microsome membrane. Its function is as follows. May be involved in the metabolism of insect hormones and in the breakdown of synthetic insecticides. The sequence is that of Probable cytochrome P450 4d21 (Cyp4d21) from Drosophila melanogaster (Fruit fly).